A 638-amino-acid polypeptide reads, in one-letter code: UvrABC system protein C (638 aa).

Positions 20 to 97 constitute a GIY-YIG domain; that stretch reads ECAGVYQMFD…IKKFQPKFNI (78 aa). One can recognise a UVR domain in the interval 209–244; the sequence is KELQENLSKKMEELSSHMYFEEAAEIRDRIKALSYV.

Belongs to the UvrC family. In terms of assembly, interacts with UvrB in an incision complex.

It localises to the cytoplasm. Its function is as follows. The UvrABC repair system catalyzes the recognition and processing of DNA lesions. UvrC both incises the 5' and 3' sides of the lesion. The N-terminal half is responsible for the 3' incision and the C-terminal half is responsible for the 5' incision. The polypeptide is UvrABC system protein C (Rickettsia canadensis (strain McKiel)).